Here is a 320-residue protein sequence, read N- to C-terminus: MLKVLFAGTPDVAVPSLKLLAQDTEHFEVVAVLTRPDAPTGRGRKLVANPVKQAALELGLPVIESDPSEETFVSELAATGAQAAAVVAYGKILKQDVLDALPMGWYNLHFSLLPQWRGAAPVQRSIWAGEKVTGATVFRIVRAMDAGPILAQSTVEIGAHETAGELLGRLAEDGSHLLAASLQALADDQIAPVEQPAGAYEVAQKITVEDAHIRFDVPVFAADRQIRACTPNPGAWCELHAHADAEPATLHVLRAQPADMSNPNAPASLEPGHIVAGKKNVWVGTSTEPLELLEVKAQGKKAMRAADWARGAHLDNAFCE.

111-114 (SLLP) is a (6S)-5,6,7,8-tetrahydrofolate binding site.

Belongs to the Fmt family.

It carries out the reaction L-methionyl-tRNA(fMet) + (6R)-10-formyltetrahydrofolate = N-formyl-L-methionyl-tRNA(fMet) + (6S)-5,6,7,8-tetrahydrofolate + H(+). Functionally, attaches a formyl group to the free amino group of methionyl-tRNA(fMet). The formyl group appears to play a dual role in the initiator identity of N-formylmethionyl-tRNA by promoting its recognition by IF2 and preventing the misappropriation of this tRNA by the elongation apparatus. The protein is Methionyl-tRNA formyltransferase of Bifidobacterium adolescentis (strain ATCC 15703 / DSM 20083 / NCTC 11814 / E194a).